The following is a 174-amino-acid chain: Peptidyl-prolyl cis-trans isomerase D, mitochondrial (174 aa).

The PPIase cyclophilin-type domain maps to 10–173 (FFQIKQGNTP…AACVIEDCGQ (164 aa)).

Belongs to the cyclophilin-type PPIase family. PPIase D subfamily.

The protein localises to the mitochondrion. The enzyme catalyses [protein]-peptidylproline (omega=180) = [protein]-peptidylproline (omega=0). With respect to regulation, binds cyclosporin A (CsA). CsA mediates some of its effects via an inhibitory action on PPIase. In terms of biological role, PPIases accelerate the folding of proteins. It catalyzes the cis-trans isomerization of proline imidic peptide bonds in oligopeptides. In Dictyostelium discoideum (Social amoeba), this protein is Peptidyl-prolyl cis-trans isomerase D, mitochondrial (cypD).